The primary structure comprises 477 residues: Bifunctional protein HldE (477 aa).

The segment at 1–318 (MKVTLPDFRR…ENAIRGRADT (318 aa)) is ribokinase. Residue 195–198 (NLSE) participates in ATP binding. Residue aspartate 264 is part of the active site. Residues 344–477 (MTNGVFDILH…INIIRQGQND (134 aa)) are cytidylyltransferase.

The protein in the N-terminal section; belongs to the carbohydrate kinase PfkB family. In the C-terminal section; belongs to the cytidylyltransferase family. In terms of assembly, homodimer.

It carries out the reaction D-glycero-beta-D-manno-heptose 7-phosphate + ATP = D-glycero-beta-D-manno-heptose 1,7-bisphosphate + ADP + H(+). The enzyme catalyses D-glycero-beta-D-manno-heptose 1-phosphate + ATP + H(+) = ADP-D-glycero-beta-D-manno-heptose + diphosphate. Its pathway is nucleotide-sugar biosynthesis; ADP-L-glycero-beta-D-manno-heptose biosynthesis; ADP-L-glycero-beta-D-manno-heptose from D-glycero-beta-D-manno-heptose 7-phosphate: step 1/4. It functions in the pathway nucleotide-sugar biosynthesis; ADP-L-glycero-beta-D-manno-heptose biosynthesis; ADP-L-glycero-beta-D-manno-heptose from D-glycero-beta-D-manno-heptose 7-phosphate: step 3/4. Catalyzes the phosphorylation of D-glycero-D-manno-heptose 7-phosphate at the C-1 position to selectively form D-glycero-beta-D-manno-heptose-1,7-bisphosphate. Its function is as follows. Catalyzes the ADP transfer from ATP to D-glycero-beta-D-manno-heptose 1-phosphate, yielding ADP-D-glycero-beta-D-manno-heptose. The polypeptide is Bifunctional protein HldE (Edwardsiella ictaluri (strain 93-146)).